We begin with the raw amino-acid sequence, 2150 residues long: A disintegrin and metalloproteinase with thrombospondin motifs gon-1 (2150 aa).

The first 28 residues, 1 to 28 (MRSIGGSFHLLQPVVAALILLVVCLVYA), serve as a signal peptide directing secretion. Residues 29–273 (LQSGSGTISE…VIERKARSRR (245 aa)) constitute a propeptide that is removed on maturation. Residues asparagine 134, asparagine 213, asparagine 243, and asparagine 248 are each glycosylated (N-linked (GlcNAc...) asparagine). Residues 280 to 493 (HYVEVLVVAD…GQTQCLFDQP (214 aa)) form the Peptidase M12B domain. Cystine bridges form between cysteine 402–cysteine 488 and cysteine 440–cysteine 470. Histidine 424 contacts Zn(2+). Glutamate 425 is a catalytic residue. Zn(2+) contacts are provided by histidine 428 and histidine 434. Residues 503–587 (FVRDEPGKKY…RLAPESLTKI (85 aa)) form the Disintegrin domain. A TSP type-1 1 domain is found at 588–643 (DGQWGDWRSWGECSRTCGGGVQKGLRDCDSPKPRNGGKYCVGQRERYRSCNTQECP). Intrachain disulfides connect cysteine 600–cysteine 637, cysteine 604–cysteine 642, and cysteine 615–cysteine 627. Asparagine 842 carries an N-linked (GlcNAc...) asparagine glycan. 11 consecutive TSP type-1 domains span residues 943–1003 (CSTR…IDCS), 1004–1057 (GRKW…RECN), 1060–1115 (PCPR…HACT), 1116–1165 (WWQF…KPCH), 1168–1227 (SCPK…GTCP), 1228–1277 (FWRN…QTCH), 1280–1339 (PCTS…DTCD), 1352–1409 (PPIR…RDCS), 1410–1469 (YWKM…EPCP), 1474–1524 (HIGS…ELCP), and 1527–1585 (TNNS…PPCR). N-linked (GlcNAc...) asparagine glycans are attached at residues asparagine 1139 and asparagine 1199. 2 N-linked (GlcNAc...) asparagine glycosylation sites follow: asparagine 1370 and asparagine 1432. Residues asparagine 1528, asparagine 1590, asparagine 1606, and asparagine 1654 are each glycosylated (N-linked (GlcNAc...) asparagine). Positions 1590-1614 (NKTSSASMTSLSSSNSNTTSSASAS) are disordered. A compositionally biased stretch (low complexity) spans 1592-1614 (TSSASMTSLSSSNSNTTSSASAS). TSP type-1 domains follow at residues 1621–1675 (PVVS…VRCR), 1678–1736 (HCPR…VACP), 1737–1793 (AYRW…DTSN), 1794–1866 (CPYE…NPCD), and 1867–1924 (SEFK…RNCL). 6 disulfides stabilise this stretch: cysteine 1679–cysteine 1718, cysteine 1690–cysteine 1694, cysteine 1690–cysteine 1730, cysteine 1694–cysteine 1735, cysteine 1705–cysteine 1718, and cysteine 1730–cysteine 1735. N-linked (GlcNAc...) asparagine glycosylation is found at asparagine 1828 and asparagine 1855. One can recognise a GON domain in the interval 1924 to 2123 (LPSTCQELKS…RYKGLIFEVN (200 aa)). N-linked (GlcNAc...) asparagine glycosylation is found at asparagine 1942, asparagine 1960, and asparagine 1997.

Zn(2+) is required as a cofactor. Expressed by the gonadal distal tip cells (DTCs). Expressed in muscles, including body wall, vulval and anal depressor muscles. Expressed in motor neurons and in ASI and ASJ neurons.

It is found in the secreted. It localises to the extracellular space. The protein localises to the extracellular matrix. Its subcellular location is the basement membrane. The protein resides in the endoplasmic reticulum. It is found in the golgi apparatus. Secreted metalloprotease required for distal tip cell (DTC) migration along the body wall basement membranes, a key step that promotes gonad morphogenesis. Probably acts by remodeling the basement membrane during cell migration. Required to restrict presynaptic growth at the neuromuscular junctions (NMJ) in late larval stage and in adult motor neurons, probably by controlling collagen IV emb-9 degradation, a component of the synapse basement membrane. Also involved in the organization of adult muscle morphology. Has a protease-independent function in promoting the transport from the endoplasmic reticulum to the Golgi apparatus of a variety of secretory cargos. Required for the secretion of insulin-like peptide ins-7, daf-28 and ins-18 and TGF beta-like protein daf-7. In peripheral tissues, negatively regulates insulin-mediated daf-16 translocation and thereby negatively regulates lifespan and dauer formation. This Caenorhabditis elegans protein is A disintegrin and metalloproteinase with thrombospondin motifs gon-1.